A 911-amino-acid chain; its full sequence is Bifunctional aspartokinase/homoserine dehydrogenase 1, chloroplastic (911 aa).

Residues 1 to 82 (MPVVSLAKVV…VENGHLPKGD (82 aa)) constitute a chloroplast transit peptide. Residues 83–331 (SWAVHKFGGT…VSEAVVLKTL (249 aa)) are aspartokinase. The segment at 332-557 (SYQEAWEMSY…LSRTTLAVGI (226 aa)) is interface. ACT domains lie at 407 to 482 (VEGT…IIPN) and 488 to 565 (AVGQ…LIGG). Residues 558–911 (IGPGLIGGTL…RLAFYLGAPS (354 aa)) are homoserine dehydrogenase. I563 and T644 together coordinate NAD(+). NADP(+) is bound by residues I563, T644, and K668. Residues I563, T644, and K668 each coordinate NADPH. E695, V698, A700, and L702 together coordinate Na(+). NADP(+) is bound by residues G753 and E756. Residues E756 and D767 each contribute to the L-homoserine site. K771 serves as the catalytic Proton donor. G888 contributes to the NAD(+) binding site. G888 lines the NADP(+) pocket. G888 contacts NADPH.

This sequence in the N-terminal section; belongs to the aspartokinase family. The protein in the C-terminal section; belongs to the homoserine dehydrogenase family. As to quaternary structure, homo- or heterodimer. A metal cation is required as a cofactor.

The protein resides in the plastid. It is found in the chloroplast. It carries out the reaction L-homoserine + NADP(+) = L-aspartate 4-semialdehyde + NADPH + H(+). It catalyses the reaction L-homoserine + NAD(+) = L-aspartate 4-semialdehyde + NADH + H(+). The enzyme catalyses L-aspartate + ATP = 4-phospho-L-aspartate + ADP. Its pathway is amino-acid biosynthesis; L-lysine biosynthesis via DAP pathway; (S)-tetrahydrodipicolinate from L-aspartate: step 1/4. The protein operates within amino-acid biosynthesis; L-methionine biosynthesis via de novo pathway; L-homoserine from L-aspartate: step 1/3. It functions in the pathway amino-acid biosynthesis; L-methionine biosynthesis via de novo pathway; L-homoserine from L-aspartate: step 3/3. It participates in amino-acid biosynthesis; L-threonine biosynthesis; L-threonine from L-aspartate: step 1/5. Its pathway is amino-acid biosynthesis; L-threonine biosynthesis; L-threonine from L-aspartate: step 3/5. With respect to regulation, inhibition of aspartate kinase activity by threonine and leucine and 3-fold activation by cysteine, isoleucine, valine, serine and alanine at 2.5 mM. Partial inhibition of homoserine dehydrogenase activity by threonine and cysteine (14% of activity remaining at saturation with either amino acid). No synergy between the effectors for both activation or inhibition. In terms of biological role, bifunctional aspartate kinase and homoserine dehydrogenase that catalyzes the first and the third steps toward the synthesis of lysine, methionine and threonine from aspartate. The polypeptide is Bifunctional aspartokinase/homoserine dehydrogenase 1, chloroplastic (Arabidopsis thaliana (Mouse-ear cress)).